Here is a 388-residue protein sequence, read N- to C-terminus: 3-amino-5-hydroxybenzoate synthase (388 aa).

Position 188 is an N6-(pyridoxal phosphate)lysine (K188).

This sequence belongs to the degT/dnrJ/eryC1 family. In terms of assembly, homodimer. Can interact with RifL. Pyridoxal 5'-phosphate serves as cofactor.

The catalysed reaction is 5-deoxy-5-amino-3-dehydroshikimate = 3-amino-5-hydroxybenzoate + H2O + H(+). It catalyses the reaction UDP-3-oxo-alpha-D-glucose + L-glutamine = UDP-alpha-D-kanosamine + 2-oxoglutaramate. It functions in the pathway antibiotic biosynthesis; rifamycin B biosynthesis. With respect to regulation, AHBA synthase activity is activated by 3-deoxy-D-arabinoheptulosonic acid 7-phosphate (DAHP), an intermediate in the shikimate pathway, and is irreversibly inhibited by gabaculine (5-amino-1,3-cyclohexadiene-1-carboxylate). Catalyzes the dehydration and aromatization of 5-amino-5-deoxy-3-dehydroshikimate (aminoDHS) to 3-amino-5-hydroxybenzoate (AHBA), a compound that then serves as the starter unit for the assembly of a polyketide during the biosynthesis of rifamycin B and other ansamycin antibiotics. Cannot utilize 5-deoxy-5-amino-3-dehydroquinate (aminoDHQ), 5-deoxy-5-aminoshikimate (aminoSA), quinate, 3-dehydroquinate, or 3-dehydroshikimate (DHS) as substrate. In terms of biological role, in a complex with RifL, RifK may have a second function in the AHBA pathway, acting as a transaminase introducing the nitrogen into the first pathway intermediate, UDP-3-keto-D-glucose, to give UDP-kanosamine. Appears to use glutamine as the nitrogen donor; NH(4)(+) or asparagine are 30% less effective as nitrogen donors and neither glutamate nor aspartate show activity. The polypeptide is 3-amino-5-hydroxybenzoate synthase (rifK) (Amycolatopsis mediterranei (strain S699) (Nocardia mediterranei)).